The chain runs to 354 residues: Macrosialin (354 aa).

An N-terminal signal peptide occupies residues 1 to 21 (MRLAVLFSGALLGLLAAQGTG). The Extracellular portion of the chain corresponds to 22–319 (NDCPHKKSAT…QSFSCPSDRS (298 aa)). The interval 23 to 140 (DCPHKKSATL…SPGFTSSAHP (118 aa)) is mucin-like. The segment covering 40-51 (PTVTESTGTTSH) has biased composition (low complexity). The segment at 40–162 (PTVTESTGTT…SKETIGDYTW (123 aa)) is disordered. The segment covering 52–61 (RTTKSHKTTT) has biased composition (basic residues). A compositionally biased stretch (low complexity) spans 62–84 (HRTTTTGTTSHGPTTATHNPTTT). Tandem repeats lie at residues 70–99 (TSHGPTTATHNPTTTSHGNVTVHPTSNSTA) and 100–129 (TSQGPSTATHSPATTSHGNATVHPTSNSTA). The interval 70–129 (TSHGPTTATHNPTTTSHGNVTVHPTSNSTATSQGPSTATHSPATTSHGNATVHPTSNSTA) is 2 X 30 AA tandem repeats. The segment covering 85-102 (SHGNVTVHPTSNSTATSQ) has biased composition (polar residues). Asparagine 88 and asparagine 96 each carry an N-linked (GlcNAc...) asparagine glycan. The segment covering 103 to 117 (GPSTATHSPATTSHG) has biased composition (low complexity). N-linked (GlcNAc...) asparagine glycosylation is found at asparagine 118 and asparagine 126. Positions 121–135 (VHPTSNSTATSPGFT) are enriched in polar residues. Residues 140-150 (PEPPPPSPSPS) are compositionally biased toward pro residues. Residues asparagine 164, asparagine 199, asparagine 246, asparagine 261, and asparagine 279 are each glycosylated (N-linked (GlcNAc...) asparagine). An intrachain disulfide couples cysteine 169 to cysteine 207. The cysteines at positions 277 and 314 are disulfide-linked. A helical transmembrane segment spans residues 320-344 (ILLPLIIGLILLGLLALVLIAFCII). Residues 345 to 354 (RRRPSAYQAL) are Cytoplasmic-facing.

It belongs to the LAMP family. N- and O-glycosylated. In terms of tissue distribution, highly expressed by blood monocytes and tissue macrophages. Also expressed in lymphocytes, fibroblasts and endothelial cells. Expressed in many tumor cell lines which could allow them to attach to selectins on vascular endothelium, facilitating their dissemination to secondary sites.

Its subcellular location is the cell membrane. The protein resides in the endosome membrane. The protein localises to the lysosome membrane. In terms of biological role, could play a role in phagocytic activities of tissue macrophages, both in intracellular lysosomal metabolism and extracellular cell-cell and cell-pathogen interactions. Binds to tissue- and organ-specific lectins or selectins, allowing homing of macrophage subsets to particular sites. Rapid recirculation of CD68 from endosomes and lysosomes to the plasma membrane may allow macrophages to crawl over selectin-bearing substrates or other cells. The polypeptide is Macrosialin (CD68) (Homo sapiens (Human)).